The chain runs to 127 residues: Fluoride-specific ion channel FluC (127 aa).

4 helical membrane passes run 8–28, 37–57, 68–88, and 100–120; these read LLIA…QYWF, PWGT…VYAI, WKFL…TFSY, and ILFL…AFAG. Residues Gly78 and Thr81 each contribute to the Na(+) site.

It belongs to the fluoride channel Fluc/FEX (TC 1.A.43) family.

It localises to the cell inner membrane. The catalysed reaction is fluoride(in) = fluoride(out). Na(+) is not transported, but it plays an essential structural role and its presence is essential for fluoride channel function. In terms of biological role, fluoride-specific ion channel. Important for reducing fluoride concentration in the cell, thus reducing its toxicity. This is Fluoride-specific ion channel FluC from Leptospira interrogans serogroup Icterohaemorrhagiae serovar copenhageni (strain Fiocruz L1-130).